Here is a 270-residue protein sequence, read N- to C-terminus: Glucosamine-6-phosphate deaminase (270 aa).

Catalysis depends on Asp72, which acts as the Proton acceptor; for enolization step. Residue Asp141 is the For ring-opening step of the active site. His143 (proton acceptor; for ring-opening step) is an active-site residue. Residue Glu148 is the For ring-opening step of the active site.

This sequence belongs to the glucosamine/galactosamine-6-phosphate isomerase family. NagB subfamily.

The catalysed reaction is alpha-D-glucosamine 6-phosphate + H2O = beta-D-fructose 6-phosphate + NH4(+). Its pathway is amino-sugar metabolism; N-acetylneuraminate degradation; D-fructose 6-phosphate from N-acetylneuraminate: step 5/5. Its activity is regulated as follows. Allosterically activated by N-acetylglucosamine 6-phosphate (GlcNAc6P). Catalyzes the reversible isomerization-deamination of glucosamine 6-phosphate (GlcN6P) to form fructose 6-phosphate (Fru6P) and ammonium ion. This Bacteroides fragilis (strain ATCC 25285 / DSM 2151 / CCUG 4856 / JCM 11019 / LMG 10263 / NCTC 9343 / Onslow / VPI 2553 / EN-2) protein is Glucosamine-6-phosphate deaminase.